The following is a 285-amino-acid chain: Trypsin Tyr p 3.0101 (285 aa).

An N-terminal signal peptide occupies residues 1 to 16 (MKILLFLCFLVSVAFA). Residues 17 to 33 (KPPTIQLKSNTKSQNGF) constitute a propeptide that is removed on maturation. The Peptidase S1 domain occupies 34-262 (IVGGTEAVDG…YLDWIELSAK (229 aa)). Cysteines 58 and 74 form a disulfide. Catalysis depends on charge relay system residues His73 and Asp120. Cystine bridges form between Cys186/Cys202 and Cys214/Cys238. Residue Ser218 is the Charge relay system of the active site.

This sequence belongs to the peptidase S1 family.

Its subcellular location is the secreted. It catalyses the reaction Preferential cleavage: Arg-|-Xaa, Lys-|-Xaa.. With respect to regulation, inhibited by the serine protease inhibitor phenylmethylsulfonyl, and trypsin inhibitors soybean trypsin inhibitor and tosyllysine chloromethyl ketone. Not inhibited by dithiothreitol, a cysteine protease inhibitor. Digests TAMe (p-toluene arginine methyl ester), but not ethyl N-benzoyl-L-tyrosinate (BTEE). The sequence is that of Trypsin Tyr p 3.0101 from Tyrophagus putrescentiae (Mold mite).